Here is a 103-residue protein sequence, read N- to C-terminus: Cell division protein FtsB (103 aa).

Topologically, residues 1 to 3 (MGK) are cytoplasmic. A helical membrane pass occupies residues 4–21 (LTLLLLALLVWLQYSLWF). Topologically, residues 22-103 (GKNGIHDYSR…RAGGPAQNNR (82 aa)) are periplasmic. The stretch at 38-62 (VQQATNAKLKARNDQLFAEIDDLNG) forms a coiled coil.

It belongs to the FtsB family. As to quaternary structure, part of a complex composed of FtsB, FtsL and FtsQ.

The protein localises to the cell inner membrane. Essential cell division protein. May link together the upstream cell division proteins, which are predominantly cytoplasmic, with the downstream cell division proteins, which are predominantly periplasmic. The polypeptide is Cell division protein FtsB (Cronobacter sakazakii (strain ATCC BAA-894) (Enterobacter sakazakii)).